Consider the following 760-residue polypeptide: Cyclin-D-binding Myb-like transcription factor 1 (760 aa).

Residues 1–237 (MSTVEEDSDT…TPEEIEKLKE (237 aa)) are interaction with CCND2. Residues 24–63 (DTDGNLILHCPQNDPDEIDSEDSTEPPHKRLCLSSEDDQS) are disordered. The segment covering 37 to 47 (DPDEIDSEDST) has biased composition (acidic residues). The interval 87-170 (VTMTATTEVA…IDILMNNIER (84 aa)) is required for transcriptional activation. Residues 87 to 458 (VTMTATTEVA…DNTAISPSPM (372 aa)) are required for DNA-binding. The segment at 176–690 (GIKDATEIIF…PTIVHQVHQT (515 aa)) is interaction with CCND1, CCND2 and CCND3. Residues 225 to 263 (GKYTPEEIEKLKELRIKHGNDWATIGAALGRSASSVKDR) form the Myb-like 1 domain. The region spanning 268–333 (KDTCNTGKWT…KWLNYLNWKQ (66 aa)) is the HTH myb-type domain. The H-T-H motif DNA-binding region spans 306-329 (WAAVAERVGTRSEKQCRSKWLNYL). One can recognise a Myb-like 2 domain in the interval 339 to 388 (WTKEDEINLILRIAELDVADENDINWDLLAEGWSSVRSPQWLRSKWWTIK). Positions 459-760 (AALQIPVQIT…KDVEDLVNCH (302 aa)) are required for transcriptional activation. Disordered stretches follow at residues 593-614 (DSDLHSSDFPEPPDALEADTFP) and 738-760 (IGSSLGSPVSEDSKDVEDLVNCH).

This sequence belongs to the DMTF1 family. Interacts with the D-type cyclins CCND1, CCND2 and CCND3. Interaction with D-type cyclins may modulate transcriptional activation by this protein. Post-translationally, phosphorylated by the cyclin-D2/CDK4, cyclin-D3/CDK4 and cyclin-D2/CDK6 complexes and to a lesser extent by the cyclin-D1/CDK4 complex.

It localises to the nucleus. Its function is as follows. Transcriptional activator which activates the CDKN2A/ARF locus in response to Ras-Raf signaling, thereby promoting p53/TP53-dependent growth arrest. Binds to the consensus sequence 5'-CCCG[GT]ATGT-3'. This Rattus norvegicus (Rat) protein is Cyclin-D-binding Myb-like transcription factor 1 (Dmtf1).